The sequence spans 830 residues: Septin and tuftelin-interacting protein 1 homolog (830 aa).

Over residues 1–17 the composition is skewed to acidic residues; the sequence is MEDDDGRESFEINDMDL. 2 disordered regions span residues 1–122 and 196–244; these read MEDD…PKQN and AYGK…KGSW. The G-patch domain occupies 153–199; it reads NSNKIMKMMQAMGYKPGEGLGAQGQGIVEPVQAQLRKGRGAVGAYGK.

It belongs to the TFP11/STIP family. In terms of assembly, identified in the spliceosome C complex. Can assemble into large rod-like polymers. As to expression, detected in muscle cells from body, pharynx and vulva, in neurons from head and tail, in pharyngeal gland and in tail hypodermal cells.

The protein resides in the nucleus. In terms of biological role, may be involved in pre-mRNA splicing. Required for embryonic development and survival. This is Septin and tuftelin-interacting protein 1 homolog (stip-1) from Caenorhabditis elegans.